Consider the following 161-residue polypeptide: uncharacterized protein (161 aa).

2 consecutive transmembrane segments (helical) span residues 13–35 (VAAV…PHAN) and 40–62 (VFSA…PFIS).

The protein resides in the cell membrane. This is an uncharacterized protein from Archaeoglobus fulgidus (strain ATCC 49558 / DSM 4304 / JCM 9628 / NBRC 100126 / VC-16).